Consider the following 175-residue polypeptide: ATP synthase subunit delta (175 aa).

The protein belongs to the ATPase delta chain family. F-type ATPases have 2 components, F(1) - the catalytic core - and F(0) - the membrane proton channel. F(1) has five subunits: alpha(3), beta(3), gamma(1), delta(1), epsilon(1). F(0) has three main subunits: a(1), b(2) and c(10-14). The alpha and beta chains form an alternating ring which encloses part of the gamma chain. F(1) is attached to F(0) by a central stalk formed by the gamma and epsilon chains, while a peripheral stalk is formed by the delta and b chains.

The protein localises to the cell inner membrane. Its function is as follows. F(1)F(0) ATP synthase produces ATP from ADP in the presence of a proton or sodium gradient. F-type ATPases consist of two structural domains, F(1) containing the extramembraneous catalytic core and F(0) containing the membrane proton channel, linked together by a central stalk and a peripheral stalk. During catalysis, ATP synthesis in the catalytic domain of F(1) is coupled via a rotary mechanism of the central stalk subunits to proton translocation. Functionally, this protein is part of the stalk that links CF(0) to CF(1). It either transmits conformational changes from CF(0) to CF(1) or is implicated in proton conduction. The sequence is that of ATP synthase subunit delta from Xanthomonas oryzae pv. oryzae (strain PXO99A).